Here is a 180-residue protein sequence, read N- to C-terminus: Small ribosomal subunit protein uS4 (180 aa).

One can recognise an S4 RNA-binding domain in the interval arginine 103 to valine 174.

This sequence belongs to the universal ribosomal protein uS4 family. In terms of assembly, part of the 30S ribosomal subunit. Contacts protein S5. The interaction surface between S4 and S5 is involved in control of translational fidelity.

One of the primary rRNA binding proteins, it binds directly to 16S rRNA where it nucleates assembly of the body of the 30S subunit. In terms of biological role, with S5 and S12 plays an important role in translational accuracy. This is Small ribosomal subunit protein uS4 from Thermococcus sibiricus (strain DSM 12597 / MM 739).